The chain runs to 403 residues: Ribosomal RNA large subunit methyltransferase I (403 aa).

The region spanning 9–88 is the PUA domain; it reads YPRLVLSKGR…ESIDIAFFTR (80 aa).

Belongs to the methyltransferase superfamily. RlmI family.

It localises to the cytoplasm. The enzyme catalyses cytidine(1962) in 23S rRNA + S-adenosyl-L-methionine = 5-methylcytidine(1962) in 23S rRNA + S-adenosyl-L-homocysteine + H(+). In terms of biological role, specifically methylates the cytosine at position 1962 (m5C1962) of 23S rRNA. This Salmonella agona (strain SL483) protein is Ribosomal RNA large subunit methyltransferase I.